The primary structure comprises 127 residues: Fluoride-specific ion channel FluC (127 aa).

4 helical membrane-spanning segments follow: residues leucine 4–methionine 24, leucine 35–phenylalanine 55, threonine 71–leucine 91, and valine 103–alanine 123. Residues glycine 75 and threonine 78 each coordinate Na(+).

It belongs to the fluoride channel Fluc/FEX (TC 1.A.43) family.

The protein resides in the cell inner membrane. It catalyses the reaction fluoride(in) = fluoride(out). Na(+) is not transported, but it plays an essential structural role and its presence is essential for fluoride channel function. Fluoride-specific ion channel. Important for reducing fluoride concentration in the cell, thus reducing its toxicity. The protein is Fluoride-specific ion channel FluC of Escherichia fergusonii (strain ATCC 35469 / DSM 13698 / CCUG 18766 / IAM 14443 / JCM 21226 / LMG 7866 / NBRC 102419 / NCTC 12128 / CDC 0568-73).